We begin with the raw amino-acid sequence, 165 residues long: Lipoprotein signal peptidase (165 aa).

5 helical membrane passes run 10–30, 42–62, 71–91, 105–125, and 133–153; these read LKWL…KYWV, VLPG…GLFT, LFVW…YKLI, IGGA…VDFI, and HWPT…IVTI. Catalysis depends on residues D123 and D141.

Belongs to the peptidase A8 family.

Its subcellular location is the cell inner membrane. It catalyses the reaction Release of signal peptides from bacterial membrane prolipoproteins. Hydrolyzes -Xaa-Yaa-Zaa-|-(S,diacylglyceryl)Cys-, in which Xaa is hydrophobic (preferably Leu), and Yaa (Ala or Ser) and Zaa (Gly or Ala) have small, neutral side chains.. Its pathway is protein modification; lipoprotein biosynthesis (signal peptide cleavage). Functionally, this protein specifically catalyzes the removal of signal peptides from prolipoproteins. The polypeptide is Lipoprotein signal peptidase (Blochmanniella pennsylvanica (strain BPEN)).